The chain runs to 51 residues: Insulin (51 aa).

Intrachain disulfides connect C7-C37, C19-C50, and C36-C41.

This sequence belongs to the insulin family. As to quaternary structure, heterodimer of a B chain and an A chain linked by two disulfide bonds.

Its subcellular location is the secreted. In terms of biological role, insulin decreases blood glucose concentration. It increases cell permeability to monosaccharides, amino acids and fatty acids. It accelerates glycolysis, the pentose phosphate cycle, and glycogen synthesis in liver. This is Insulin (INS) from Ptyas dhumnades (Big-eyed ratsnake).